Consider the following 314-residue polypeptide: Epithelial cell adhesion molecule (314 aa).

An N-terminal signal peptide occupies residues 1–23 (MAPPQVLAFGLLLAAATAAVAAA). The Extracellular segment spans residues 24–265 (QQGCVCENYK…PPEFSMQGLQ (242 aa)). 6 cysteine pairs are disulfide-bonded: Cys27-Cys46, Cys29-Cys59, Cys38-Cys48, Cys66-Cys99, Cys110-Cys116, and Cys118-Cys135. Asn37 is a glycosylation site (N-linked (GlcNAc...) asparagine). The 73-residue stretch at 63–135 (ASKCLVMKAE…RTDKDSEISC (73 aa)) folds into the Thyroglobulin type-1 domain. The N-linked (GlcNAc...) asparagine glycan is linked to Asn111. Asn198 carries N-linked (GlcNAc...) asparagine glycosylation. A helical membrane pass occupies residues 266 to 288 (AGIIAVIAVVAIAIVAGIIVLIV). Residues 289-314 (STKKRRAKYEKAEIKEMGEMHRELNA) are Cytoplasmic-facing.

This sequence belongs to the EPCAM family. In terms of assembly, monomer. Interacts with phosphorylated CLDN7. Glycosylation at Asn-198 is crucial for protein stability.

The protein resides in the lateral cell membrane. It is found in the cell junction. Its subcellular location is the tight junction. May act as a physical homophilic interaction molecule between intestinal epithelial cells (IECs) and intraepithelial lymphocytes (IELs) at the mucosal epithelium for providing immunological barrier as a first line of defense against mucosal infection. Plays a role in embryonic stem cells proliferation and differentiation. Up-regulates the expression of FABP5, MYC and cyclins A and E. The polypeptide is Epithelial cell adhesion molecule (TACSTD1) (Sus scrofa (Pig)).